The chain runs to 400 residues: Melanization protease 1 (400 aa).

A signal peptide spans 1–22 (MEPHFFFTVLWMLLMGTSSTYA). Positions 23-137 (QEIFGYCRTP…PNCGENFGDR (115 aa)) are cleaved as a propeptide — activation peptide. The region spanning 28–91 (YCRTPDENSG…FCFTNVQICC (64 aa)) is the Clip domain. 3 cysteine pairs are disulfide-bonded: Cys-29/Cys-90, Cys-39/Cys-70, and Cys-45/Cys-91. The tract at residues 98–120 (NQQPQWGNHPQPTQTTKPTKRSG) is disordered. Intrachain disulfides connect Cys-130–Cys-268, Cys-168–Cys-184, and Cys-210–Cys-220. Residues 138-399 (VVGGNETTKR…YLNWIENNVR (262 aa)) enclose the Peptidase S1 domain. Asn-142 is a glycosylation site (N-linked (GlcNAc...) asparagine). The active-site Charge relay system is the His-183. Ca(2+) contacts are provided by Glu-201, Asp-203, Thr-206, and Asp-209. The active-site Charge relay system is the Asp-248. Asn-296 carries N-linked (GlcNAc...) asparagine glycosylation. Intrachain disulfides connect Cys-315–Cys-332 and Cys-342–Cys-375. The Charge relay system role is filled by Ser-346.

The protein belongs to the peptidase S1 family. CLIP subfamily.

Serine protease which plays an essential role in the melanization immune response by acting downstream of sp7 to activate prophenoloxidase (PPO1). May function in diverse Hayan-dependent PPO1-activating cascades that are negatively controlled by different serpin proteins; Spn27A in the hemolymph and Spn77BA in the trachea. Regulation of melanization and PPO1 activation appears to be largely independent of the Toll signaling pathway. In Drosophila melanogaster (Fruit fly), this protein is Melanization protease 1.